The chain runs to 447 residues: Oxysterols receptor LXR-alpha (447 aa).

A disordered region spans residues 1–88 (MSLWLEAPVP…LRPQKRKKGP (88 aa)). The transactivation AF-1; required for ligand-independent transactivation function stretch occupies residues 1–96 (MSLWLEAPVP…GPAPKMLGNE (96 aa)). A DNA-binding region (nuclear receptor) is located at residues 95 to 170 (NELCSVCGDK…AGMREECVLS (76 aa)). 2 consecutive NR C4-type zinc fingers follow at residues 98-118 (CSVCGDKASGFHYNVLSCEGC) and 134-158 (CHSGGHCPMDTYMRRKCQECRLRKC). Residues 178 to 203 (KMKRQEEEQAQATSAPPRASSPPQVL) form a disordered region. Residues 187–203 (AQATSAPPRASSPPQVL) show a composition bias toward low complexity. The interval 205 to 447 (QLSPEQLGMI…LLSEIWDVHE (243 aa)) is transactivation AF-2; required for ligand-dependent transactivation function; mediates interaction with CCAR2. The region spanning 209–447 (EQLGMIEKLV…LLSEIWDVHE (239 aa)) is the NR LBD domain.

The protein belongs to the nuclear hormone receptor family. NR1 subfamily. Heterodimer of NR1H3 and RXR (retinoic acid receptor). Interacts with CCAR2 (via N-terminus) in a ligand-independent manner. Interacts with SIRT1 and this interaction is inhibited by CCAR2. Post-translationally, ubiquitinated by UBR5, leading to its degradation: UBR5 specifically recognizes and binds ligand-bound NR1H3 when it is not associated with coactivators (NCOAs). In presence of NCOAs, the UBR5-degron is not accessible, preventing its ubiquitination and degradation.

The protein localises to the nucleus. It is found in the cytoplasm. Its function is as follows. Nuclear receptor that exhibits a ligand-dependent transcriptional activation activity. Interaction with retinoic acid receptor (RXR) shifts RXR from its role as a silent DNA-binding partner to an active ligand-binding subunit in mediating retinoid responses through target genes defined by LXRES. LXRES are DR4-type response elements characterized by direct repeats of two similar hexanuclotide half-sites spaced by four nucleotides. Plays an important role in the regulation of cholesterol homeostasis, regulating cholesterol uptake through MYLIP-dependent ubiquitination of LDLR, VLDLR and LRP8. Interplays functionally with RORA for the regulation of genes involved in liver metabolism. Induces LPCAT3-dependent phospholipid remodeling in endoplasmic reticulum (ER) membranes of hepatocytes, driving SREBF1 processing and lipogenesis. Via LPCAT3, triggers the incorporation of arachidonate into phosphatidylcholines of ER membranes, increasing membrane dynamics and enabling triacylglycerols transfer to nascent very low-density lipoprotein (VLDL) particles. Via LPCAT3 also counteracts lipid-induced ER stress response and inflammation, likely by modulating SRC kinase membrane compartmentalization and limiting the synthesis of lipid inflammatory mediators. This chain is Oxysterols receptor LXR-alpha (NR1H3), found in Bos taurus (Bovine).